Consider the following 722-residue polypeptide: Polyribonucleotide nucleotidyltransferase (722 aa).

Residues D487 and D493 each contribute to the Mg(2+) site. Residues 554-613 (PRIETFKIPTDKIREVIGTGGKVIREIVEKTGAKVNIEDDGTVKVASSDGESIKAAIKWI) enclose the KH domain. Residues 623-691 (GEIYEGTVVK…DRGKTRLSMK (69 aa)) enclose the S1 motif domain. The interval 691–722 (KVVDQDTGEDLEAKQKAEAKAEDEAPAQAAGE) is disordered. The span at 701–713 (LEAKQKAEAKAED) shows a compositional bias: basic and acidic residues.

It belongs to the polyribonucleotide nucleotidyltransferase family. The cofactor is Mg(2+).

Its subcellular location is the cytoplasm. The enzyme catalyses RNA(n+1) + phosphate = RNA(n) + a ribonucleoside 5'-diphosphate. Involved in mRNA degradation. Catalyzes the phosphorolysis of single-stranded polyribonucleotides processively in the 3'- to 5'-direction. This is Polyribonucleotide nucleotidyltransferase from Rhodopseudomonas palustris (strain BisB5).